A 354-amino-acid polypeptide reads, in one-letter code: Pyrimidine monooxygenase RutA (354 aa).

Residues 49-50 (IK), N115, E124, 140-141 (RY), and S189 each bind FMN.

It belongs to the NtaA/SnaA/DszA monooxygenase family. RutA subfamily.

It catalyses the reaction uracil + FMNH2 + NADH + O2 = (Z)-3-ureidoacrylate + FMN + NAD(+) + H2O + H(+). It carries out the reaction thymine + FMNH2 + NADH + O2 = (Z)-2-methylureidoacrylate + FMN + NAD(+) + H2O + H(+). Functionally, catalyzes the pyrimidine ring opening between N-3 and C-4 by an unusual flavin hydroperoxide-catalyzed mechanism, adding oxygen atoms in the process to yield ureidoacrylate peracid, that immediately reacts with FMN forming ureidoacrylate and FMN-N(5)-oxide. The FMN-N(5)-oxide reacts spontaneously with NADH to produce FMN. Requires the flavin reductase RutF to regenerate FMN in vivo. This is Pyrimidine monooxygenase RutA from Caulobacter sp. (strain K31).